A 150-amino-acid chain; its full sequence is Viral late gene transcription factor 2 (150 aa).

This sequence belongs to the orthopoxvirus VLTF-2/OPG126 family. As to quaternary structure, interacts with itself. Interacts with the late transcription factors VLTF-1/OPG093.

Acts with RNA polymerase to initiate transcription from late gene promoters. This is Viral late gene transcription factor 2 (OPG126) from Vaccinia virus (strain Copenhagen) (VACV).